Consider the following 910-residue polypeptide: MDYENFVKSAEEINNLHNVNYLETKDLNDFNWKAAYYICKEIYDKQQINKDGYVVIGLSGGRTPIDVYKNMCLIKDIKIDKSKLIFFIIDERYKSDDHKFSNYNNIKFLFHNLNINEKEQLYKPDTTKSIVDCILDYNDKIKIMIEKYKKVDIAILGMGSDFHIASLFPNIFYNIYMNNYQNNYIYNEKTLDFINNDQDNDNLKYLKEYVYFTTTNQFDVRKRITVSLNLLANASSKIFLLNSKDKLDLWKNMLIKSYIEVNYNLYPATYLIDTSCTNENVNINNNNNNNNKNKNNYCYSNTTVISCGYENYTKSIEEIYDSKYALSLYSNSLNKEELLTIIIFGCSGDLAKKKIYPALFKLFCNNSLPKDLLIIGFARTVQDFDTFFDKIVIYLKRCLLCYEDWSISKKKDLLNGFKNRCRYFVGNYSSSESFENFNKYLTTIEEEEAKKKYYATCYKMNGSDYNISNNVAEDNISIDDENKTNEYFQMCTPKNCPDNVFSSNYNFPYVINRMLYLALPPHIFVSTLKNYKKNCLNSKGTDKILLEKPFGNDLDSFKMLSKQILENFNEQQIYRIDHYLGKDMVSGLLKLKFTNTFLLSLMNRHFIKCIKITLKETKGVYGRGQYFDPYGIIRDVMQNHMLQLLTLITMEDPIDLNDESVKNEKIKILKSIPSIKLEDTIIGQYEKAENFKEDENNDDESKKNHSYHDDPHIDKNSITPTFCTCILYINSINWYGVPIIFKSGKGLNKDICEIRIQFHNIMGSSDENMNNNEFVIILQPVEAIYLKMMIKKTGCEEMEEVQLNLTVNEKNKKINVPEAYETLLLECFKGHKKKFISDEELYESWRIFTPLLKELQEKQVKPLKYSFGSSGPKEVFGLVKKYYNYGKNYTHRPEFVRKSSFYEDDLLDIN.

A 6-phosphogluconolactonase region spans residues 1–170; that stretch reads MDYENFVKSA…DFHIASLFPN (170 aa). Residues 171 to 276 are linker; that stretch reads IFYNIYMNNY…PATYLIDTSC (106 aa). The interval 277 to 910 is glucose-6-phosphate 1-dehydrogenase; sequence TNENVNINNN…FYEDDLLDIN (634 aa). NADP(+)-binding positions include 345 to 352, arginine 379, and lysine 548; that span reads GCSGDLAK. D-glucose 6-phosphate contacts are provided by residues lysine 548, 578 to 582, glutamate 616, and aspartate 635; that span reads HYLGK. The Proton acceptor role is filled by histidine 640. A disordered region spans residues 689 to 711; that stretch reads ENFKEDENNDDESKKNHSYHDDP. Residue lysine 742 coordinates NADP(+). Lysine 745 is a D-glucose 6-phosphate binding site. An NADP(+)-binding site is contributed by arginine 755. Glutamine 779 serves as a coordination point for D-glucose 6-phosphate. Residue 785-787 coordinates NADP(+); that stretch reads YLK.

It in the N-terminal section; belongs to the glucosamine/galactosamine-6-phosphate isomerase family. 6-phosphogluconolactonase subfamily. The protein in the C-terminal section; belongs to the glucose-6-phosphate dehydrogenase family. Homotetramer.

It catalyses the reaction 6-phospho-D-glucono-1,5-lactone + H2O = 6-phospho-D-gluconate + H(+). The enzyme catalyses D-glucose 6-phosphate + NADP(+) = 6-phospho-D-glucono-1,5-lactone + NADPH + H(+). It functions in the pathway carbohydrate degradation; pentose phosphate pathway; D-ribulose 5-phosphate from D-glucose 6-phosphate (oxidative stage): step 1/3. It participates in carbohydrate degradation; pentose phosphate pathway; D-ribulose 5-phosphate from D-glucose 6-phosphate (oxidative stage): step 2/3. With respect to regulation, G6PD activity is inhibited by glucosamine-6-phosphate, NADPH, and 4-(4-bromophenyl)-7-(3,4-dimethoxyphenyl)-4,6,7,8-tetrahydroquinoline-2,5(1 H,3H)-dione. G6PD and 6PGL activities can be reversibly inhibited by S-glutathionylation (in vitro). Its function is as follows. Bifunctional enzyme which catalyzes the first two steps of the oxidative pentose-phosphate pathway, which represents a route for the dissimilation of carbohydrates besides glycolysis. The main function of this enzyme is to provide reducing power (NADPH) and pentose phosphates for fatty acid and nucleic acid synthesis. The sequence is that of Bifunctional glucose-6-phosphate 1-dehydrogenase/6-phosphogluconolactonase from Plasmodium falciparum (isolate 3D7).